Here is a 284-residue protein sequence, read N- to C-terminus: Cystinosin homolog (284 aa).

A run of 7 helical transmembrane segments spans residues 3–23 (ALSIISIIIGWIYFACWSLSF), 37–57 (IGLSFDFLLFNITGYACYSVF), 86–106 (IAFAIHGFVLTAITIIQCFIY), 116–136 (LGIGIATLIWVSLIVMTILGF), 139–159 (VFTWLWVINYYSYVKLFITFI), 181–201 (NVLLDFSGGVLSLLQMFLDVA), and 216–236 (LGLSLFSIAFDILFIIQHYIL). The PQ-loop 1 domain maps to 4–70 (LSIISIIIGW…LYFDKLVKNE (67 aa)). The 55-residue stretch at 154-208 (LFITFIKYIPQAYLNFKNKSTSGWSVHNVLLDFSGGVLSLLQMFLDVADSGNWNI) folds into the PQ-loop 2 domain. Residues 247–269 (NLNDNNIPNNNNNNNNNINNNTP) form a disordered region.

This sequence belongs to the cystinosin family.

It is found in the lysosome membrane. The enzyme catalyses L-cystine(out) + H(+)(out) = L-cystine(in) + H(+)(in). In terms of biological role, cystine/H(+) symporter that mediates export of cystine, the oxidized dimer of cysteine, from lysosomes. This is Cystinosin homolog (ctns) from Dictyostelium discoideum (Social amoeba).